The sequence spans 133 residues: Small ribosomal subunit protein uS8 (133 aa).

This sequence belongs to the universal ribosomal protein uS8 family. As to quaternary structure, part of the 30S ribosomal subunit. Contacts proteins S5 and S12.

Functionally, one of the primary rRNA binding proteins, it binds directly to 16S rRNA central domain where it helps coordinate assembly of the platform of the 30S subunit. This Trichormus variabilis (strain ATCC 29413 / PCC 7937) (Anabaena variabilis) protein is Small ribosomal subunit protein uS8.